We begin with the raw amino-acid sequence, 690 residues long: Rho guanine nucleotide exchange factor 4 (690 aa).

An ABR (APC-binding region) domain region spans residues 73–126; the sequence is KTQRKKLQKQAHVERRLHIGAVHKDGVKCWRKTIITSPESLNLPRRSHPLSQSA. The interval 113 to 145 is disordered; it reads LNLPRRSHPLSQSAPTGLNHMGWPEHTPGTAMP. The region spanning 194-253 is the SH3 domain; the sequence is GSVVCAEALWDHVTMDDQELGFKAGDVIEVMDATNREWWWGRVADGEGWFPASFVRLRVN. The tract at residues 257–282 is disordered; sequence PADDDAPLAGNSGAEDGGAEAQSSKD. Residues 284–468 enclose the DH domain; it reads MRTNVINEIL…KNVAQLINER (185 aa). A PH domain is found at 499–606; that stretch reads ELIYSGELTR…WLKAFARERE (108 aa).

Isoform 3 interacts with RHOA and RAC1, and (via ABR domain) with APC. Found in a complex consisting of ARHGEF4, APC and CTNNB1. Expressed at high levels in the brain, skeletal muscle and testis and at low levels in the kidney, lung, small intestine, ovary and prostate. Expression is aberrantly enhanced in most colorectal tumors.

The protein localises to the cytoplasm. Its subcellular location is the cell projection. It localises to the ruffle membrane. Functionally, acts as a guanine nucleotide exchange factor (GEF) for RHOA, RAC1 and CDC42 GTPases. Binding of APC may activate RAC1 GEF activity. The APC-ARHGEF4 complex seems to be involved in cell migration as well as in E-cadherin-mediated cell-cell adhesion. Required for MMP9 up-regulation via the JNK signaling pathway in colorectal tumor cells. Involved in tumor angiogenesis and may play a role in intestinal adenoma formation and tumor progression. This chain is Rho guanine nucleotide exchange factor 4 (ARHGEF4), found in Homo sapiens (Human).